Reading from the N-terminus, the 508-residue chain is Maturase K (508 aa).

Belongs to the intron maturase 2 family. MatK subfamily.

It is found in the plastid. The protein resides in the chloroplast. Its function is as follows. Usually encoded in the trnK tRNA gene intron. Probably assists in splicing its own and other chloroplast group II introns. The polypeptide is Maturase K (Amburana cearensis (Cerejeira)).